A 194-amino-acid chain; its full sequence is Adenine phosphoribosyltransferase (194 aa).

This sequence belongs to the purine/pyrimidine phosphoribosyltransferase family. As to quaternary structure, homodimer.

It localises to the cytoplasm. It carries out the reaction AMP + diphosphate = 5-phospho-alpha-D-ribose 1-diphosphate + adenine. The protein operates within purine metabolism; AMP biosynthesis via salvage pathway; AMP from adenine: step 1/1. Catalyzes a salvage reaction resulting in the formation of AMP, that is energically less costly than de novo synthesis. The sequence is that of Adenine phosphoribosyltransferase from Albidiferax ferrireducens (strain ATCC BAA-621 / DSM 15236 / T118) (Rhodoferax ferrireducens).